Reading from the N-terminus, the 162-residue chain is 2-amino-4-hydroxy-6-hydroxymethyldihydropteridine pyrophosphokinase (162 aa).

Belongs to the HPPK family.

It carries out the reaction 6-hydroxymethyl-7,8-dihydropterin + ATP = (7,8-dihydropterin-6-yl)methyl diphosphate + AMP + H(+). It functions in the pathway cofactor biosynthesis; tetrahydrofolate biosynthesis; 2-amino-4-hydroxy-6-hydroxymethyl-7,8-dihydropteridine diphosphate from 7,8-dihydroneopterin triphosphate: step 4/4. Its function is as follows. Catalyzes the transfer of pyrophosphate from adenosine triphosphate (ATP) to 6-hydroxymethyl-7,8-dihydropterin, an enzymatic step in folate biosynthesis pathway. In Pseudomonas aeruginosa (strain ATCC 15692 / DSM 22644 / CIP 104116 / JCM 14847 / LMG 12228 / 1C / PRS 101 / PAO1), this protein is 2-amino-4-hydroxy-6-hydroxymethyldihydropteridine pyrophosphokinase (folK).